We begin with the raw amino-acid sequence, 73 residues long: Translation initiation factor IF-1 (73 aa).

An S1-like domain is found at 1–72; sequence MAKDDVIEVE…TKGRITYRFI (72 aa).

Belongs to the IF-1 family. In terms of assembly, component of the 30S ribosomal translation pre-initiation complex which assembles on the 30S ribosome in the order IF-2 and IF-3, IF-1 and N-formylmethionyl-tRNA(fMet); mRNA recruitment can occur at any time during PIC assembly.

The protein resides in the cytoplasm. In terms of biological role, one of the essential components for the initiation of protein synthesis. Stabilizes the binding of IF-2 and IF-3 on the 30S subunit to which N-formylmethionyl-tRNA(fMet) subsequently binds. Helps modulate mRNA selection, yielding the 30S pre-initiation complex (PIC). Upon addition of the 50S ribosomal subunit IF-1, IF-2 and IF-3 are released leaving the mature 70S translation initiation complex. This is Translation initiation factor IF-1 from Lactobacillus acidophilus (strain ATCC 700396 / NCK56 / N2 / NCFM).